A 221-amino-acid chain; its full sequence is MKTLVLKISGKFVSPYDTPLVEGYAKTLEALRRKYKLAVVVGGGSVARKYIELAPPSKGLKDLIGIEVSRLNALLLSMHTPSAKKVIPKSASEVLELWDGEDILIVGGLQPGQSTNAVALVVAELVGADLVVNATTVDAVYDKPPSQPGAKRIEKIKARELQRLLESFDWKNEPGRYELMDSIALQIAERSKIPIAVIYGGEPERIPSIVEEEAWGTLILP.

7-11 (KISGK) is a binding site for ATP. Position 43 (glycine 43) interacts with UMP. Positions 44 and 48 each coordinate ATP. Residues aspartate 62 and 109–115 (LQPGQST) each bind UMP. ATP is bound by residues threonine 135 and tyrosine 141.

This sequence belongs to the UMP kinase family. Homohexamer.

It is found in the cytoplasm. It carries out the reaction UMP + ATP = UDP + ADP. The protein operates within pyrimidine metabolism; CTP biosynthesis via de novo pathway; UDP from UMP (UMPK route): step 1/1. Inhibited by UTP. Functionally, catalyzes the reversible phosphorylation of UMP to UDP. The polypeptide is Uridylate kinase (Ignicoccus hospitalis (strain KIN4/I / DSM 18386 / JCM 14125)).